A 267-amino-acid chain; its full sequence is 3-methyl-2-oxobutanoate hydroxymethyltransferase (267 aa).

D46 and D85 together coordinate Mg(2+). 3-methyl-2-oxobutanoate contacts are provided by residues 46-47, D85, and K115; that span reads DS. E117 provides a ligand contact to Mg(2+). E184 (proton acceptor) is an active-site residue.

It belongs to the PanB family. As to quaternary structure, homodecamer; pentamer of dimers. Mg(2+) is required as a cofactor.

The protein localises to the cytoplasm. It catalyses the reaction 3-methyl-2-oxobutanoate + (6R)-5,10-methylene-5,6,7,8-tetrahydrofolate + H2O = 2-dehydropantoate + (6S)-5,6,7,8-tetrahydrofolate. It participates in cofactor biosynthesis; (R)-pantothenate biosynthesis; (R)-pantoate from 3-methyl-2-oxobutanoate: step 1/2. In terms of biological role, catalyzes the reversible reaction in which hydroxymethyl group from 5,10-methylenetetrahydrofolate is transferred onto alpha-ketoisovalerate to form ketopantoate. The polypeptide is 3-methyl-2-oxobutanoate hydroxymethyltransferase (Geotalea daltonii (strain DSM 22248 / JCM 15807 / FRC-32) (Geobacter daltonii)).